Reading from the N-terminus, the 390-residue chain is MNIHEFQAKEILKRYGVNVAKGAVAENLEQASEILNDLEGEIFALKAQIHAGGRGLAGGVKIASSREQAIQFASKLLGMTLITPQTPKNGILVRKIYIEEGLNFKQEIYLSLAFDRNSEKISLIVSKDGGVSIEETAKQNPHLIKTISIDPQIGLCGFHTKELINFLQIDKILWSKLDTLLQNLYKIYIFKDANLIEINPLVLTQDDEFYALDAKMSFDDSALFRHEDIRALNDETQTDTSENEAKAQRLNYIKLEGSVGCVVNGAGLAMATMDIIKELGGEAANFLDVGGAATGEGVAKAFRLILNDRRVKVIFVNIFGGIVRCDRIAAGIIEACQSTPLGVPVVVRLDGTNAKEALDMLKNSALKGLHTSDDLFEGARLAVMLAKGEK.

An ATP-grasp domain is found at Lys9–Glu244. Residues Lys46, Gly53–Gly55, Glu99, Leu102, and Glu107 each bind ATP. Mg(2+)-binding residues include Asn199 and Asp213. Residues Asn264 and Gly321 to Val323 contribute to the substrate site.

The protein belongs to the succinate/malate CoA ligase beta subunit family. Heterotetramer of two alpha and two beta subunits. Mg(2+) is required as a cofactor.

The enzyme catalyses succinate + ATP + CoA = succinyl-CoA + ADP + phosphate. It catalyses the reaction GTP + succinate + CoA = succinyl-CoA + GDP + phosphate. It functions in the pathway carbohydrate metabolism; tricarboxylic acid cycle; succinate from succinyl-CoA (ligase route): step 1/1. Functionally, succinyl-CoA synthetase functions in the citric acid cycle (TCA), coupling the hydrolysis of succinyl-CoA to the synthesis of either ATP or GTP and thus represents the only step of substrate-level phosphorylation in the TCA. The beta subunit provides nucleotide specificity of the enzyme and binds the substrate succinate, while the binding sites for coenzyme A and phosphate are found in the alpha subunit. The protein is Succinate--CoA ligase [ADP-forming] subunit beta of Campylobacter curvus (strain 525.92).